The sequence spans 212 residues: Ras-related protein Rab-2A (212 aa).

The residue at position 2 (A2) is an N-acetylalanine. The interval 2–19 is required for interaction with PRKCI; sequence AYAYLFKYIIIGDTGVGK. GTP-binding residues include G16, V17, G18, K19, S20, C21, and T38. S20 contacts Mg(2+). Positions 37–42 match the Switch 1 motif; that stretch reads LTMGVE. Mg(2+)-binding residues include T38 and D61. A Switch 2 motif is present at residues 63-72; the sequence is AGQESFRSIT. Residues G64, N119, K120, D122, A150, and K151 each contribute to the GTP site. The interval 190 to 212 is disordered; it reads QHAATNASHGGNQGGQQAGGGCC. Positions 200–212 are enriched in gly residues; that stretch reads GNQGGQQAGGGCC. S-geranylgeranyl cysteine attachment occurs at residues C211 and C212.

Belongs to the small GTPase superfamily. Rab family. As to quaternary structure, interacts with PRKCI. Interacts with TRIP11. Interacts (in GTP-bound form) with GARIN1B. Interacts (GTP-bound) with HOPS complex component VPS39; interaction contributes to obtaining a functional HOPS complex that promotes autophagosome-lysosome membrane fusion driven by STX17-SNAP29-VAMP8. May interact with VPS41. It depends on Mg(2+) as a cofactor. In terms of processing, prenylated. Prenylation is required for association with cellular membranes.

The protein resides in the endoplasmic reticulum-Golgi intermediate compartment membrane. The protein localises to the melanosome. Its subcellular location is the endoplasmic reticulum membrane. It localises to the golgi apparatus membrane. It is found in the cytoplasmic vesicle. The protein resides in the secretory vesicle. The protein localises to the acrosome. Its subcellular location is the autophagosome membrane. It catalyses the reaction GTP + H2O = GDP + phosphate + H(+). Its activity is regulated as follows. Regulated by guanine nucleotide exchange factors (GEFs) which promote the exchange of bound GDP for free GTP, GTPase activating proteins (GAPs) which increase the GTP hydrolysis activity, and GDP dissociation inhibitors (GDIs) which inhibit the dissociation of the nucleotide from the GTPase. Functionally, the small GTPases Rab are key regulators of intracellular membrane trafficking, from the formation of transport vesicles to their fusion with membranes. Rabs cycle between active GTP-bound and inactive GDP-bound states. In their active state, drive transport of vesicular carriers from donor organelles to acceptor organelles to regulate the membrane traffic that maintains organelle identity and morphology. RAB2A regulates autophagy by promoting autophagosome-lysosome fusion via recruitment of the HOPS endosomal tethering complex; this process involves autophagosomal RAB2A and lysosomal RAB39A recruitment of HOPS subcomplexes VPS39-VPS11 and VPS41-VPS16-VPS18-VPS33A, respectively, which assemble into a functional complex to mediate membrane tethering and SNAREs-driven membrane fusion. Required for protein transport from the endoplasmic reticulum to the Golgi complex. Regulates the compacted morphology of the Golgi. Together with RAB2B, redundantly required for efficient autophagic flux. The protein is Ras-related protein Rab-2A (Rab2a) of Rattus norvegicus (Rat).